Here is a 423-residue protein sequence, read N- to C-terminus: Maltooligosaccharide ABC transporter solute-binding lipoprotein (423 aa).

The first 24 residues, 1 to 24, serve as a signal peptide directing secretion; that stretch reads MSSKFMKSAAVLGTATLASLLLVA. Cysteine 25 is lipidated: N-palmitoyl cysteine. Cysteine 25 carries the S-diacylglycerol cysteine lipid modification. Residues tyrosine 52, aspartate 77, aspartate 83, 103–104, glutamate 148, aspartate 193, asparagine 196, 251–254, tryptophan 274, and lysine 307 each bind substrate; these read DR and EGAG.

This sequence belongs to the bacterial solute-binding protein 1 family.

Its subcellular location is the cell membrane. Its function is as follows. Part of an ABC transporter complex involved in the uptake of maltodextrins. Binds glycogen-derived linear maltooligosaccharides increasing in size from maltotriose to maltooctaose with the highest affinity for maltotriose. Has a very weak affinity for maltose. Has also a very low affinity for maltotetraitol, indicating that the binding is selective for maltooligosaccharides with an intact reducing end. The chain is Maltooligosaccharide ABC transporter solute-binding lipoprotein from Streptococcus pneumoniae serotype 4 (strain ATCC BAA-334 / TIGR4).